The sequence spans 159 residues: Ribosomal RNA large subunit methyltransferase H (159 aa).

S-adenosyl-L-methionine-binding positions include L76, G108, and 127 to 132; that span reads FSKMTF.

This sequence belongs to the RNA methyltransferase RlmH family. In terms of assembly, homodimer.

The protein resides in the cytoplasm. The enzyme catalyses pseudouridine(1915) in 23S rRNA + S-adenosyl-L-methionine = N(3)-methylpseudouridine(1915) in 23S rRNA + S-adenosyl-L-homocysteine + H(+). Specifically methylates the pseudouridine at position 1915 (m3Psi1915) in 23S rRNA. The polypeptide is Ribosomal RNA large subunit methyltransferase H (Exiguobacterium sibiricum (strain DSM 17290 / CCUG 55495 / CIP 109462 / JCM 13490 / 255-15)).